The following is a 154-amino-acid chain: 17 kDa surface antigen (154 aa).

Positions 1 to 19 (MKLLSKIMVIALATSMLQA) are cleaved as a signal peptide. The N-palmitoyl cysteine moiety is linked to residue Cys20. Residue Cys20 is the site of S-diacylglycerol cysteine attachment.

This sequence belongs to the rickettsiale 17 kDa surface antigen family.

The protein localises to the cell outer membrane. This Rickettsia parkeri protein is 17 kDa surface antigen (omp).